The chain runs to 523 residues: FAD-dependent monooxygenase drtC (523 aa).

An FAD-binding PCMH-type domain is found at 77–252 (TSLNSACIVL…TNFEVRAFPQ (176 aa)).

It belongs to the oxygen-dependent FAD-linked oxidoreductase family. It depends on FAD as a cofactor.

Its pathway is secondary metabolite biosynthesis; terpenoid biosynthesis. FAD-dependent monooxygenase; part of the gene cluster that mediates the biosynthesis of various drimane-type sesquiterpene esters, compounds that exhibit diverse biological activities and are widely present in eukaryotes. The pathway begins with the synthesis of the backbone drimenol by the terpene cyclase drtB using farnesyl pyrophosphate (FPP) as substrate. The cytochrome P450 monooxygenase drtD is then responsible for the hydroxylations at C-6, C-9 and C-12, as well as the oxidation of hydroxyl groups at C-6 and C-11 to a ketone and an aldehyde, respectively. Then, the biosynthesis can go in two directions, either the hydroxylated drimenol is further hydroxylated at C-2 and C-3 by an enzyme(s) not associated with the drt cluster, or the FAD-binding oxidoreductase drtC further oxidizes C-11 or C-12 to form the butyrolactone ring. DrtB, drtD and drtC are solely responsible for the formation of the different drimane structures observed during drimane sesquiterpenes biosynthesis. The polyketide synthase drtA synthesizes different lengths (C6 and C8) of PKS chains, which are then oxidized to varying degrees by the short-chain dehydrogenase drtF. Finally, these PKS chains are transferred onto drimane sesquiterpenes by the acyltransferase drtE, forming the sesquiterpene esters. In addition to the different fatty acyl-CoA chains produced by drtA, drtE is also able to use cinnamoyl-CoA as a substrate. This chain is FAD-dependent monooxygenase drtC, found in Aspergillus calidoustus.